The chain runs to 337 residues: Mitochondrial glutathione transporter SLC25A40 (337 aa).

Solcar repeat units follow at residues 14-132 (VTPL…LSTF), 140-224 (NETR…LRRW), and 234-328 (STFM…GKGF). 6 helical membrane passes run 20–40 (MMAS…LDVV), 104–124 (LWSG…IYFT), 146–166 (IVAG…LELI), 200–221 (WAPT…YENL), 240–260 (FTAG…FDVV), and 299–319 (GLFT…AIMI).

It belongs to the mitochondrial carrier (TC 2.A.29) family. As to expression, widely expressed at low level.

It is found in the mitochondrion inner membrane. It carries out the reaction glutathione(in) = glutathione(out). In terms of biological role, probable mitochondrial transporter required for glutathione import into mitochondria. Glutathione, which plays key roles in oxidative metabolism, is produced exclusively in the cytosol and is imported in many organelles. Mitochondrial glutathione is required for the activity and stability of proteins containing iron-sulfur clusters, as well as erythropoiesis. The chain is Mitochondrial glutathione transporter SLC25A40 from Rattus norvegicus (Rat).